Consider the following 282-residue polypeptide: Phosphatidylserine decarboxylase proenzyme (282 aa).

Active-site charge relay system; for autoendoproteolytic cleavage activity residues include D88, H144, and S247. S247 acts as the Schiff-base intermediate with substrate; via pyruvic acid; for decarboxylase activity in catalysis. A Pyruvic acid (Ser); by autocatalysis modification is found at S247.

This sequence belongs to the phosphatidylserine decarboxylase family. PSD-B subfamily. Prokaryotic type I sub-subfamily. As to quaternary structure, heterodimer of a large membrane-associated beta subunit and a small pyruvoyl-containing alpha subunit. It depends on pyruvate as a cofactor. In terms of processing, is synthesized initially as an inactive proenzyme. Formation of the active enzyme involves a self-maturation process in which the active site pyruvoyl group is generated from an internal serine residue via an autocatalytic post-translational modification. Two non-identical subunits are generated from the proenzyme in this reaction, and the pyruvate is formed at the N-terminus of the alpha chain, which is derived from the carboxyl end of the proenzyme. The autoendoproteolytic cleavage occurs by a canonical serine protease mechanism, in which the side chain hydroxyl group of the serine supplies its oxygen atom to form the C-terminus of the beta chain, while the remainder of the serine residue undergoes an oxidative deamination to produce ammonia and the pyruvoyl prosthetic group on the alpha chain. During this reaction, the Ser that is part of the protease active site of the proenzyme becomes the pyruvoyl prosthetic group, which constitutes an essential element of the active site of the mature decarboxylase.

The protein localises to the cell membrane. The enzyme catalyses a 1,2-diacyl-sn-glycero-3-phospho-L-serine + H(+) = a 1,2-diacyl-sn-glycero-3-phosphoethanolamine + CO2. The protein operates within phospholipid metabolism; phosphatidylethanolamine biosynthesis; phosphatidylethanolamine from CDP-diacylglycerol: step 2/2. In terms of biological role, catalyzes the formation of phosphatidylethanolamine (PtdEtn) from phosphatidylserine (PtdSer). This chain is Phosphatidylserine decarboxylase proenzyme, found in Xanthomonas campestris pv. campestris (strain 8004).